The following is an 852-amino-acid chain: Lon protease homolog 2, peroxisomal (852 aa).

An N-acetylserine modification is found at serine 2. The 210-residue stretch at 13–222 (LPLLLTHEGV…MTIPLLVRQI (210 aa)) folds into the Lon N-terminal domain. 375-382 (GPPGVGKT) is an ATP binding site. Positions 651-837 (LSQPGVAIGL…DEVLNAAFDG (187 aa)) constitute a Lon proteolytic domain. Active-site residues include serine 743 and lysine 786. Residues 850-852 (SKL) carry the Microbody targeting signal motif.

The protein belongs to the peptidase S16 family. As to quaternary structure, interacts with PEX5. Interacts with TYSND1. May interact with enzymes involved in beta-oxidation of fatty acids, including ACOX1/AOX.

The protein resides in the peroxisome matrix. The catalysed reaction is Hydrolysis of proteins in presence of ATP.. ATP-dependent serine protease that mediates the selective degradation of misfolded and unassembled polypeptides in the peroxisomal matrix. Necessary for type 2 peroxisome targeting signal (PTS2)-containing protein processing and facilitates peroxisome matrix protein import. May indirectly regulate peroxisomal fatty acid beta-oxidation through degradation of the self-processed forms of TYSND1. This is Lon protease homolog 2, peroxisomal from Bos taurus (Bovine).